We begin with the raw amino-acid sequence, 290 residues long: Bifunctional protein FolD (290 aa).

NADP(+) is bound by residues 164-166, Ser-193, and Ile-234; that span reads GRS.

Belongs to the tetrahydrofolate dehydrogenase/cyclohydrolase family. As to quaternary structure, homodimer.

The catalysed reaction is (6R)-5,10-methylene-5,6,7,8-tetrahydrofolate + NADP(+) = (6R)-5,10-methenyltetrahydrofolate + NADPH. It catalyses the reaction (6R)-5,10-methenyltetrahydrofolate + H2O = (6R)-10-formyltetrahydrofolate + H(+). It participates in one-carbon metabolism; tetrahydrofolate interconversion. Its function is as follows. Catalyzes the oxidation of 5,10-methylenetetrahydrofolate to 5,10-methenyltetrahydrofolate and then the hydrolysis of 5,10-methenyltetrahydrofolate to 10-formyltetrahydrofolate. The sequence is that of Bifunctional protein FolD from Cytophaga hutchinsonii (strain ATCC 33406 / DSM 1761 / CIP 103989 / NBRC 15051 / NCIMB 9469 / D465).